We begin with the raw amino-acid sequence, 360 residues long: Peptide chain release factor 1 (360 aa).

Q235 carries the post-translational modification N5-methylglutamine. Residues A291–R308 are compositionally biased toward basic and acidic residues. A disordered region spans residues A291 to F312.

It belongs to the prokaryotic/mitochondrial release factor family. In terms of processing, methylated by PrmC. Methylation increases the termination efficiency of RF1.

The protein localises to the cytoplasm. Its function is as follows. Peptide chain release factor 1 directs the termination of translation in response to the peptide chain termination codons UAG and UAA. The chain is Peptide chain release factor 1 from Yersinia pseudotuberculosis serotype O:1b (strain IP 31758).